Reading from the N-terminus, the 414-residue chain is Serine hydroxymethyltransferase (414 aa).

(6S)-5,6,7,8-tetrahydrofolate is bound by residues Leu121 and 125–127; that span reads GHL. N6-(pyridoxal phosphate)lysine is present on Lys229.

Belongs to the SHMT family. Homodimer. Pyridoxal 5'-phosphate serves as cofactor.

The protein resides in the cytoplasm. The catalysed reaction is (6R)-5,10-methylene-5,6,7,8-tetrahydrofolate + glycine + H2O = (6S)-5,6,7,8-tetrahydrofolate + L-serine. It participates in one-carbon metabolism; tetrahydrofolate interconversion. The protein operates within amino-acid biosynthesis; glycine biosynthesis; glycine from L-serine: step 1/1. Catalyzes the reversible interconversion of serine and glycine with tetrahydrofolate (THF) serving as the one-carbon carrier. This reaction serves as the major source of one-carbon groups required for the biosynthesis of purines, thymidylate, methionine, and other important biomolecules. Also exhibits THF-independent aldolase activity toward beta-hydroxyamino acids, producing glycine and aldehydes, via a retro-aldol mechanism. The polypeptide is Serine hydroxymethyltransferase (Thiobacillus denitrificans (strain ATCC 25259 / T1)).